The following is a 284-amino-acid chain: Nucleotide-binding protein Shewmr7_3352 (284 aa).

8 to 15 (GRSGSGKS) contributes to the ATP binding site. 56–59 (DVRN) is a binding site for GTP.

This sequence belongs to the RapZ-like family.

Its function is as follows. Displays ATPase and GTPase activities. This chain is Nucleotide-binding protein Shewmr7_3352, found in Shewanella sp. (strain MR-7).